A 540-amino-acid chain; its full sequence is Chaperonin GroEL (540 aa).

Residues 29-32 (TLGP), 86-90 (DGTTT), Gly413, 477-479 (DAL), and Asp493 each bind ATP.

It belongs to the chaperonin (HSP60) family. Forms a cylinder of 14 subunits composed of two heptameric rings stacked back-to-back. Interacts with the co-chaperonin GroES.

It localises to the cytoplasm. The enzyme catalyses ATP + H2O + a folded polypeptide = ADP + phosphate + an unfolded polypeptide.. Its function is as follows. Together with its co-chaperonin GroES, plays an essential role in assisting protein folding. The GroEL-GroES system forms a nano-cage that allows encapsulation of the non-native substrate proteins and provides a physical environment optimized to promote and accelerate protein folding. The chain is Chaperonin GroEL from Clostridium botulinum (strain Eklund 17B / Type B).